Consider the following 97-residue polypeptide: Co-chaperonin GroES (97 aa).

Belongs to the GroES chaperonin family. In terms of assembly, heptamer of 7 subunits arranged in a ring. Interacts with the chaperonin GroEL.

It is found in the cytoplasm. Together with the chaperonin GroEL, plays an essential role in assisting protein folding. The GroEL-GroES system forms a nano-cage that allows encapsulation of the non-native substrate proteins and provides a physical environment optimized to promote and accelerate protein folding. GroES binds to the apical surface of the GroEL ring, thereby capping the opening of the GroEL channel. This Ectopseudomonas mendocina (strain ymp) (Pseudomonas mendocina) protein is Co-chaperonin GroES.